Consider the following 311-residue polypeptide: Homeobox-leucine zipper protein HOX1 (311 aa).

Disordered stretches follow at residues Ala29–Arg69 and Ala97–Arg160. Residues Ser119–Ala145 are compositionally biased toward low complexity. The segment at residues Gly154–Gln213 is a DNA-binding region (homeobox). The segment at Lys212–His256 is leucine-zipper. The interval Ser279–Ala311 is disordered. The segment covering Ala280–Gly289 has biased composition (polar residues). The segment covering Arg294–Pro303 has biased composition (pro residues).

It belongs to the HD-ZIP homeobox family. Class II subfamily. As to quaternary structure, homodimer. May form a heterodimer with HOX2, HOX3 or HOX7. In terms of tissue distribution, expressed in root provascular and vascular cylinder, provascular and vascular strands of leaves, provascular and vascular strands of the whole panicle, in mature embryo provascular bundles of scutellum and embryonic axis and provascular and vascular strands of young immature spikelet organs. Expressed in differentiating and differentiated xylem and phloem elements, and in outer and inner bundle sheath cells of all vascular bundles. Expressed in auricles, ligules, culm, guard cells brac hairs and pollen.

The protein localises to the nucleus. Probable transcription repressor involved leaf development. Binds to the DNA sequence 5'-CAAT[GC]ATTG-3'. May act as a regulatory switch to specify provascular cell fate. The protein is Homeobox-leucine zipper protein HOX1 (HOX1) of Oryza sativa subsp. japonica (Rice).